A 368-amino-acid polypeptide reads, in one-letter code: 4-hydroxy-3-methylbut-2-en-1-yl diphosphate synthase (flavodoxin) (368 aa).

[4Fe-4S] cluster-binding residues include Cys268, Cys271, Cys303, and Glu310.

This sequence belongs to the IspG family. It depends on [4Fe-4S] cluster as a cofactor.

It catalyses the reaction (2E)-4-hydroxy-3-methylbut-2-enyl diphosphate + oxidized [flavodoxin] + H2O + 2 H(+) = 2-C-methyl-D-erythritol 2,4-cyclic diphosphate + reduced [flavodoxin]. It functions in the pathway isoprenoid biosynthesis; isopentenyl diphosphate biosynthesis via DXP pathway; isopentenyl diphosphate from 1-deoxy-D-xylulose 5-phosphate: step 5/6. In terms of biological role, converts 2C-methyl-D-erythritol 2,4-cyclodiphosphate (ME-2,4cPP) into 1-hydroxy-2-methyl-2-(E)-butenyl 4-diphosphate. This Listeria monocytogenes serovar 1/2a (strain ATCC BAA-679 / EGD-e) protein is 4-hydroxy-3-methylbut-2-en-1-yl diphosphate synthase (flavodoxin).